Consider the following 392-residue polypeptide: Imidazolonepropionase (392 aa).

H69 and H71 together coordinate Fe(3+). Zn(2+)-binding residues include H69 and H71. Residues R78, Y136, and H163 each contribute to the 4-imidazolone-5-propanoate site. Y136 is an N-formimidoyl-L-glutamate binding site. Residue H226 participates in Fe(3+) binding. H226 contacts Zn(2+). Residue Q229 coordinates 4-imidazolone-5-propanoate. D302 contacts Fe(3+). A Zn(2+)-binding site is contributed by D302. N-formimidoyl-L-glutamate contacts are provided by N304 and G306. S307 contributes to the 4-imidazolone-5-propanoate binding site.

The protein belongs to the metallo-dependent hydrolases superfamily. HutI family. It depends on Zn(2+) as a cofactor. Fe(3+) is required as a cofactor.

The protein localises to the cytoplasm. The catalysed reaction is 4-imidazolone-5-propanoate + H2O = N-formimidoyl-L-glutamate. Its pathway is amino-acid degradation; L-histidine degradation into L-glutamate; N-formimidoyl-L-glutamate from L-histidine: step 3/3. In terms of biological role, catalyzes the hydrolytic cleavage of the carbon-nitrogen bond in imidazolone-5-propanoate to yield N-formimidoyl-L-glutamate. It is the third step in the universal histidine degradation pathway. In Salinispora arenicola (strain CNS-205), this protein is Imidazolonepropionase.